The primary structure comprises 340 residues: Ribonucleoside-diphosphate reductase small subunit (340 aa).

A helical membrane pass occupies residues F180–Y200.

Belongs to the ribonucleoside diphosphate reductase small chain family. As to quaternary structure, heterotetramer composed of a homodimer of the large subunit (R1) and a homodimer of the small subunit (R2). Larger multisubunit protein complex are also active, composed of (R1)n(R2)n. Fe cation serves as cofactor.

The protein localises to the host membrane. It catalyses the reaction a 2'-deoxyribonucleoside 5'-diphosphate + [thioredoxin]-disulfide + H2O = a ribonucleoside 5'-diphosphate + [thioredoxin]-dithiol. Ribonucleoside-diphosphate reductase holoenzyme provides the precursors necessary for viral DNA synthesis. Allows virus growth in non-dividing cells, as well as reactivation from latency in infected hosts. Catalyzes the biosynthesis of deoxyribonucleotides from the corresponding ribonucleotides. The sequence is that of Ribonucleoside-diphosphate reductase small subunit from Human herpesvirus 1 (strain 17) (HHV-1).